The sequence spans 248 residues: Probable N-acetylglucosaminyl-phosphatidylinositol de-N-acetylase (248 aa).

Over 1–7 (MIWFWST) the chain is Lumenal. A helical membrane pass occupies residues 8 to 24 (LLVTAIAVLSTANESSS). The Cytoplasmic portion of the chain corresponds to 25–248 (GQEKLAVESI…MSNNVLKRAT (224 aa)).

This sequence belongs to the PIGL family.

The protein localises to the endoplasmic reticulum membrane. The catalysed reaction is a 6-(N-acetyl-alpha-D-glucosaminyl)-1-(1,2-diacyl-sn-glycero-3-phospho)-1D-myo-inositol + H2O = a 6-(alpha-D-glucosaminyl)-1-(1,2-diacyl-sn-glycero-3-phospho)-1D-myo-inositol + acetate. Its pathway is glycolipid biosynthesis; glycosylphosphatidylinositol-anchor biosynthesis. In terms of biological role, involved in the second step of GPI biosynthesis. De-N-acetylation of N-acetylglucosaminyl-phosphatidylinositol. This chain is Probable N-acetylglucosaminyl-phosphatidylinositol de-N-acetylase (gpi12), found in Schizosaccharomyces pombe (strain 972 / ATCC 24843) (Fission yeast).